The primary structure comprises 427 residues: UPF0761 membrane protein Plut_1323 (427 aa).

Transmembrane regions (helical) follow at residues 51–71, 105–125, 147–167, 188–208, 221–241, and 251–271; these read LLSI…FAVF, TFTM…VLIS, FTLY…SLAA, LLSL…YLLV, GALV…FYVA, and GALS…VVVL.

Belongs to the UPF0761 family.

The protein resides in the cell inner membrane. This is UPF0761 membrane protein Plut_1323 from Chlorobium luteolum (strain DSM 273 / BCRC 81028 / 2530) (Pelodictyon luteolum).